Consider the following 142-residue polypeptide: Putative pre-16S rRNA nuclease (142 aa).

This sequence belongs to the YqgF nuclease family.

It localises to the cytoplasm. In terms of biological role, could be a nuclease involved in processing of the 5'-end of pre-16S rRNA. This is Putative pre-16S rRNA nuclease from Staphylococcus aureus (strain JH1).